Consider the following 169-residue polypeptide: Fumarase E (169 aa).

Belongs to the MtlR/FumE family. In terms of assembly, homodimer.

The catalysed reaction is (S)-malate = fumarate + H2O. Functionally, in vitro catalyzes the addition of water to fumarate, forming malate. Cannot catalyze the reverse reaction. Cannot use the cis-isomer maleate as substrate. This Shigella flexneri protein is Fumarase E.